The following is a 317-amino-acid chain: Beta-ketoacyl-[acyl-carrier-protein] synthase III (317 aa).

Catalysis depends on residues C112 and H244. Residues Q245–R249 are ACP-binding. N274 is a catalytic residue.

This sequence belongs to the thiolase-like superfamily. FabH family. In terms of assembly, homodimer.

The protein resides in the cytoplasm. It catalyses the reaction malonyl-[ACP] + acetyl-CoA + H(+) = 3-oxobutanoyl-[ACP] + CO2 + CoA. It functions in the pathway lipid metabolism; fatty acid biosynthesis. In terms of biological role, catalyzes the condensation reaction of fatty acid synthesis by the addition to an acyl acceptor of two carbons from malonyl-ACP. Catalyzes the first condensation reaction which initiates fatty acid synthesis and may therefore play a role in governing the total rate of fatty acid production. Possesses both acetoacetyl-ACP synthase and acetyl transacylase activities. Its substrate specificity determines the biosynthesis of branched-chain and/or straight-chain of fatty acids. The chain is Beta-ketoacyl-[acyl-carrier-protein] synthase III from Rickettsia prowazekii (strain Madrid E).